The primary structure comprises 701 residues: Ribosomal RNA large subunit methyltransferase K/L (701 aa).

The THUMP domain occupies 43–155; the sequence is LLYKSLMWSR…NNILHIMLDL (113 aa).

Belongs to the methyltransferase superfamily. RlmKL family.

The protein resides in the cytoplasm. The catalysed reaction is guanosine(2445) in 23S rRNA + S-adenosyl-L-methionine = N(2)-methylguanosine(2445) in 23S rRNA + S-adenosyl-L-homocysteine + H(+). It carries out the reaction guanosine(2069) in 23S rRNA + S-adenosyl-L-methionine = N(2)-methylguanosine(2069) in 23S rRNA + S-adenosyl-L-homocysteine + H(+). Functionally, specifically methylates the guanine in position 2445 (m2G2445) and the guanine in position 2069 (m7G2069) of 23S rRNA. The protein is Ribosomal RNA large subunit methyltransferase K/L of Buchnera aphidicola subsp. Acyrthosiphon pisum (strain APS) (Acyrthosiphon pisum symbiotic bacterium).